Here is a 414-residue protein sequence, read N- to C-terminus: Serine--tRNA ligase (414 aa).

Position 230–232 (threonine 230–glutamate 232) interacts with L-serine. Arginine 261 to glutamate 263 is an ATP binding site. Glutamate 284 is a binding site for L-serine. Glutamate 348 to serine 351 lines the ATP pocket. Serine 382 is a binding site for L-serine.

Belongs to the class-II aminoacyl-tRNA synthetase family. Type-1 seryl-tRNA synthetase subfamily. In terms of assembly, homodimer. The tRNA molecule binds across the dimer.

The protein localises to the cytoplasm. The catalysed reaction is tRNA(Ser) + L-serine + ATP = L-seryl-tRNA(Ser) + AMP + diphosphate + H(+). It carries out the reaction tRNA(Sec) + L-serine + ATP = L-seryl-tRNA(Sec) + AMP + diphosphate + H(+). Its pathway is aminoacyl-tRNA biosynthesis; selenocysteinyl-tRNA(Sec) biosynthesis; L-seryl-tRNA(Sec) from L-serine and tRNA(Sec): step 1/1. Its function is as follows. Catalyzes the attachment of serine to tRNA(Ser). Is also able to aminoacylate tRNA(Sec) with serine, to form the misacylated tRNA L-seryl-tRNA(Sec), which will be further converted into selenocysteinyl-tRNA(Sec). The protein is Serine--tRNA ligase of Sulfurovum sp. (strain NBC37-1).